The primary structure comprises 174 residues: Ubiquitin-like protein 4B (174 aa).

The 76-residue stretch at 1-76 folds into the Ubiquitin-like domain; sequence MFLTVKLLLG…INVIMQPLEK (76 aa). Residues 141-156 are compositionally biased toward basic and acidic residues; it reads EPHVEPAGERELEAKA. The interval 141 to 174 is disordered; sequence EPHVEPAGERELEAKARPQSSCDMEEKEEAAADQ. The span at 163 to 174 shows a compositional bias: acidic residues; the sequence is DMEEKEEAAADQ.

It localises to the cytoplasm. The chain is Ubiquitin-like protein 4B (UBL4B) from Homo sapiens (Human).